The sequence spans 2378 residues: Serine/threonine-protein kinase ATM (2378 aa).

The region spanning 1415–1937 (LSARKRNTMM…LHTILMYDDE (523 aa)) is the FAT domain. In terms of domain architecture, PI3K/PI4K catalytic spans 2044–2366 (WKDVFTIADG…LLREATSADN (323 aa)). Residues 2050–2056 (IADGIST) are G-loop. The catalytic loop stretch occupies residues 2218–2226 (GLGDRHASN). The interval 2238 to 2263 (HIDLGMILEYSKRTLPVPEQVPFRIT) is activation loop. Residues 2346–2378 (TAQSSNLQIRRLLREATSADNLSRMFCGWMPFL) form the FATC domain.

Belongs to the PI3/PI4-kinase family. ATM subfamily.

The protein resides in the nucleus. The catalysed reaction is L-seryl-[protein] + ATP = O-phospho-L-seryl-[protein] + ADP + H(+). The enzyme catalyses L-threonyl-[protein] + ATP = O-phospho-L-threonyl-[protein] + ADP + H(+). Serine/threonine protein kinase which activates checkpoint signaling in the presence of DNA double strand breaks (DSBs) and other forms of DNA damage induced by ionizing radiation and other genotoxic stresses such as UV. Plays a role in maintaining genome stability. The polypeptide is Serine/threonine-protein kinase ATM (atm-1) (Caenorhabditis elegans).